Reading from the N-terminus, the 278-residue chain is Serine/arginine-rich splicing factor SR34B (278 aa).

Positions 7–82 (RTIYVGNLPG…HHLRVELAHG (76 aa)) constitute an RRM 1 domain. Over residues 81–91 (HGGRRSSHDAR) the composition is skewed to basic and acidic residues. 2 disordered regions span residues 81–121 (HGGR…SEYR) and 192–263 (EYDS…RSLS). Gly residues predominate over residues 95 to 107 (SGRGRGGRGGGDG). 2 stretches are compositionally biased toward basic and acidic residues: residues 108–120 (GGRE…RSEY) and 192–201 (EYDSRRDSRS). Residues 120–195 (YRVVVSGLPS…EYVRVREYDS (76 aa)) form the RRM 2 domain. Phosphoserine occurs at positions 201, 203, 225, 231, 233, 242, 250, 259, and 263. Positions 207–243 (SYSKSRSRGRSPSRSRSRSRSRSKSRSPKAKSLRRSP) are enriched in basic residues.

This sequence belongs to the splicing factor SR family. SR subfamily. As to quaternary structure, component of the spliceosome.

The protein localises to the nucleus speckle. Its subcellular location is the nucleus. The protein resides in the nucleoplasm. In terms of biological role, probably involved in intron recognition and spliceosome assembly. The polypeptide is Serine/arginine-rich splicing factor SR34B (SR34B) (Arabidopsis thaliana (Mouse-ear cress)).